Here is a 165-residue protein sequence, read N- to C-terminus: Protein SprT (165 aa).

Residues 20–163 enclose the SprT-like domain; sequence EKLAQANLKL…RCVHCGEQLV (144 aa). Residue histidine 78 participates in Zn(2+) binding. Glutamate 79 is a catalytic residue. Histidine 82 provides a ligand contact to Zn(2+).

This sequence belongs to the SprT family. Zn(2+) is required as a cofactor.

It localises to the cytoplasm. In Shigella flexneri serotype 5b (strain 8401), this protein is Protein SprT.